Reading from the N-terminus, the 105-residue chain is uncharacterized protein (105 aa).

A helical membrane pass occupies residues 13–35 (LLFAFVVVIVVLTLSYVYAQNII).

Its subcellular location is the membrane. This is an uncharacterized protein from Archaeoglobus fulgidus (strain ATCC 49558 / DSM 4304 / JCM 9628 / NBRC 100126 / VC-16).